The sequence spans 497 residues: Probable D-lactate dehydrogenase, mitochondrial (497 aa).

The FAD-binding PCMH-type domain occupies 65 to 246 (HRCRPPDVVV…TKATLRLYGV (182 aa)).

Belongs to the FAD-binding oxidoreductase/transferase type 4 family. Requires FAD as cofactor.

The protein localises to the mitochondrion. The enzyme catalyses (R)-lactate + 2 Fe(III)-[cytochrome c] = 2 Fe(II)-[cytochrome c] + pyruvate + 2 H(+). Involved in D-lactate, but not L-lactate catabolic process. This Danio rerio (Zebrafish) protein is Probable D-lactate dehydrogenase, mitochondrial (ldhd).